The following is a 109-amino-acid chain: MFGKGGLGGLMKQAQQMQERMQKMQEEIAQLEVTGESGAGLVKVTINGAHNCRRIEIDPSLMEDDKEMAEDLVAAAFNDAVRRADEMQKEKMASVTAGMQLPPGMKFPF.

The segment at 1 to 21 (MFGKGGLGGLMKQAQQMQERM) is disordered. Residues 10–19 (LMKQAQQMQE) show a composition bias toward low complexity.

This sequence belongs to the YbaB/EbfC family. In terms of assembly, homodimer.

Its subcellular location is the cytoplasm. It is found in the nucleoid. Its function is as follows. Binds to DNA and alters its conformation. May be involved in regulation of gene expression, nucleoid organization and DNA protection. The polypeptide is Nucleoid-associated protein HAPS_1040 (Glaesserella parasuis serovar 5 (strain SH0165) (Haemophilus parasuis)).